The sequence spans 484 residues: ATP-dependent rRNA helicase RRP3 (484 aa).

2 stretches are compositionally biased toward low complexity: residues 1–14 (MPSP…SMSQ) and 22–34 (PSPA…APEA). A disordered region spans residues 1-38 (MPSPSPEASSSMSQPGPPSRSPSPASSNPDAPEASHNK). The short motif at 38–66 (KTFADLGISPELCRACASMGFKKPSDIQA) is the Q motif element. In terms of domain architecture, Helicase ATP-binding spans 69–240 (IPHALEGKDI…RASLNKPVRV (172 aa)). Residue 82-89 (AQTGSGKT) coordinates ATP. Residues 188–191 (DEAD) carry the DEAD box motif. The 149-residue stretch at 263 to 411 (NKDAYLLYLA…SFDVDKEAVA (149 aa)) folds into the Helicase C-terminal domain. A disordered region spans residues 425-484 (ALEMRESGTGGGGGKRGRDKGKRKTFGDGDDRDRDDDVVEAGVPRKKNKFTPGGKKKARK). Basic residues-rich tracts occupy residues 439-448 (KRGRDKGKRK) and 468-484 (PRKK…KARK).

It belongs to the DEAD box helicase family. DDX47/RRP3 subfamily. Interacts with the SSU processome.

Its subcellular location is the nucleus. The catalysed reaction is ATP + H2O = ADP + phosphate + H(+). In terms of biological role, ATP-dependent rRNA helicase required for pre-ribosomal RNA processing. Involved in the maturation of the 35S-pre-rRNA and to its cleavage to mature 18S rRNA. In Cryptococcus neoformans var. neoformans serotype D (strain B-3501A) (Filobasidiella neoformans), this protein is ATP-dependent rRNA helicase RRP3.